The primary structure comprises 231 residues: Large ribosomal subunit protein uL1 (231 aa).

Belongs to the universal ribosomal protein uL1 family. Part of the 50S ribosomal subunit.

Functionally, binds directly to 23S rRNA. The L1 stalk is quite mobile in the ribosome, and is involved in E site tRNA release. In terms of biological role, protein L1 is also a translational repressor protein, it controls the translation of the L11 operon by binding to its mRNA. The sequence is that of Large ribosomal subunit protein uL1 from Chlorobaculum tepidum (strain ATCC 49652 / DSM 12025 / NBRC 103806 / TLS) (Chlorobium tepidum).